Reading from the N-terminus, the 354-residue chain is Methylthioribose-1-phosphate isomerase (354 aa).

Substrate contacts are provided by residues 58-60 (RGA), R101, and Q204. The active-site Proton donor is D245. Substrate is bound at residue 255–256 (NK).

This sequence belongs to the eIF-2B alpha/beta/delta subunits family. MtnA subfamily.

The enzyme catalyses 5-(methylsulfanyl)-alpha-D-ribose 1-phosphate = 5-(methylsulfanyl)-D-ribulose 1-phosphate. It functions in the pathway amino-acid biosynthesis; L-methionine biosynthesis via salvage pathway; L-methionine from S-methyl-5-thio-alpha-D-ribose 1-phosphate: step 1/6. Its function is as follows. Catalyzes the interconversion of methylthioribose-1-phosphate (MTR-1-P) into methylthioribulose-1-phosphate (MTRu-1-P). This is Methylthioribose-1-phosphate isomerase from Xanthomonas campestris pv. campestris (strain ATCC 33913 / DSM 3586 / NCPPB 528 / LMG 568 / P 25).